A 339-amino-acid chain; its full sequence is Bifunctional NMN adenylyltransferase/Nudix hydrolase (339 aa).

An NMN adenylyltransferase region spans residues 1 to 183; sequence MQTKYQYGIY…RYIALCDEYQ (183 aa). The region spanning 199 to 335 is the Nudix hydrolase domain; that stretch reads PTFITTDAVV…EDHFQIIQHF (137 aa). Residues 233–254 carry the Nudix box motif; that stretch reads GFIKQNETLVEGMLRELKEETR.

It in the N-terminal section; belongs to the archaeal NMN adenylyltransferase family. Requires Mg(2+) as cofactor. Mn(2+) serves as cofactor.

Its subcellular location is the cytoplasm. It carries out the reaction beta-nicotinamide D-ribonucleotide + ATP + H(+) = diphosphate + NAD(+). Its pathway is cofactor biosynthesis; NAD(+) biosynthesis; NAD(+) from nicotinamide D-ribonucleotide: step 1/1. Its function is as follows. The Nudix hydrolase domain is active on ADP-ribose, (2')-phospho-ADP-ribose, IDP-ribose and NADPH. The protein is Bifunctional NMN adenylyltransferase/Nudix hydrolase of Synechocystis sp. (strain ATCC 27184 / PCC 6803 / Kazusa).